The primary structure comprises 1342 residues: MVYSYTEKKRIRKDFGKRPQVLDVPYLLSIQLDSFQKFIEQDPDGQNGLEAAFRSVFPIQSYSGNAELQYVSYRLGEPVFDVKECQIRGVTYSAPLRVKLRLVIYEREAPEGTVKDIKEQEVYMGEIPLMTDNGTFVINGTERVIVSQLHRSPGVFFDSDKGKTHSSGKVLYNARIIPYRGSWLDFEFDPKDNLFVRIDRRRKLPATIILRAMNYSTEDILNLFFEKTTFEISNNKLMMTLVPERLRGETASFDIEANGKVYVEKGRRITARHIRQLEKEQIERIEVPVEYIAGKVVARDYIDEATGELICAANMEISLDVLARLSQAGHKTIETLFTNDLDHGAYISETIRVDPTNDRLSALVEIYRMMRPGEPPTREAAENLFENLFFSEDRYDLSAVGRMKFNRSLGREEVEGSGILSQEDIIEVMKKLIDIRNGKGEVDDIDHLGNRRIRSVGEMAENQFRVGLVRVERAVKERLSLGDLDALMPQDMINAKPISAAVKEFFGSSQLSQFMDQNNPLSEITHKRRISALGPGGLTRERAGFEVRDVHPTHYGRVCPIETPEGPNIGLINSLSVYAQTNEYGFLETPYRVVENNAVTDEIHYLSAIEEGNFIIAQANSVLDDDGHFVEELVTCRHKGESSLFSRDQVQYMDVSTQQVVSVGASLIPFLEHDDANRALMGANMQRQAVPTLRGDKPLVGTGMERAVAVDSGVTAVAKRGGTVQYVDASRIVIKVNEDETYAGEAGIDIYSLTKYTRSNQNTCINQTPCVSLGEPVERGDVLADGPSTDLGELALGQNMRVAFMPWNGYNYEDSILVSERVVQEDRFTTIHIQELACVSRDTKLGPEEITADIPNVGEAALSKLDESGIVYIGAEVKGGDILVGKVTPKGETQLTPEEKLLRAIFGEKASDVKDSSLRVPNGVSGTVIDVQVFTRDGVEKDKRALEIEESQLREVKKDLTEELRIFEAGLFARIRGVLIAGGIEADKLDKLPRERWLELGLADEEKQNQLEQLAEQYDELKAEFAKKLEAKRRKITQGDDLAPGVLKIVKVYLAVKRQIQPGDKMAGRHGNKGVISKINPIEDMPYDENGNPVDLVLNPLGVPSRMNIGQILETHLGMAAKGIGDKINAMLKQQQEVAKLREFIQKAYDLGMAPRQKVDLDTFSDEEVLRLAENLKKGMPTATPVFDGAEEMEIKEMLKLADLPTSGQITLFDGRTGEQFERPVTVGYMYMLKLNHLVDDKMHARSTGSYSLVTQQPLGGKAQFGGQRFGEMEVWALEAYGAAYTLQEMLTVKSDDVNGRTKMYKNIVDGNHQMEPGMPESFNVLLKEIRSLGINIELEDE.

This sequence belongs to the RNA polymerase beta chain family. As to quaternary structure, the RNAP catalytic core consists of 2 alpha, 1 beta, 1 beta' and 1 omega subunit. When a sigma factor is associated with the core the holoenzyme is formed, which can initiate transcription.

It catalyses the reaction RNA(n) + a ribonucleoside 5'-triphosphate = RNA(n+1) + diphosphate. DNA-dependent RNA polymerase catalyzes the transcription of DNA into RNA using the four ribonucleoside triphosphates as substrates. This Proteus mirabilis (strain HI4320) protein is DNA-directed RNA polymerase subunit beta.